The sequence spans 184 residues: Peptidyl-tRNA hydrolase (184 aa).

TRNA is bound at residue Tyr-13. Catalysis depends on His-18, which acts as the Proton acceptor. Phe-59, Asn-61, and Asn-105 together coordinate tRNA.

The protein belongs to the PTH family. Monomer.

It is found in the cytoplasm. The enzyme catalyses an N-acyl-L-alpha-aminoacyl-tRNA + H2O = an N-acyl-L-amino acid + a tRNA + H(+). Hydrolyzes ribosome-free peptidyl-tRNAs (with 1 or more amino acids incorporated), which drop off the ribosome during protein synthesis, or as a result of ribosome stalling. Its function is as follows. Catalyzes the release of premature peptidyl moieties from peptidyl-tRNA molecules trapped in stalled 50S ribosomal subunits, and thus maintains levels of free tRNAs and 50S ribosomes. In Sulfurimonas denitrificans (strain ATCC 33889 / DSM 1251) (Thiomicrospira denitrificans (strain ATCC 33889 / DSM 1251)), this protein is Peptidyl-tRNA hydrolase.